Reading from the N-terminus, the 1712-residue chain is MATALQKQLAAIAASSTHQLDLKAQKSAHGKSLLFEPKIAASQSFETVYLICYEGFRDLCALDSRFLQFSKSLFSEQSKVEDRTQMTKEENKKLNAVVEAFITLVVNTPGFFNALQAHTVRVVKAGHQAPQMISFWSTITLEAVFGILENTSSGRRDIQSQKTEELVLRILPVLNSCMQAKYGAETVAACYSIVTVLAGRGELGEKVLDGLMEAVVLAHEADSLNACLQCLAVLAEQRSPAQLPPRVIRRLLKVPQLSQKLVQISKQCRVHRLTLGCALGALASIDRLEEQRDVFQELMASGLLTEAYTRAALAALVTSIRDSAPGSTEHGQLLDLAAQLAETTYFLDGMRAAAKSDNVDLESLGLTLAPALETAQIDNDEDEDMLDVDDVSSQAIAAPKVEVPDFAVQSFLELDASQSFAEVANAFERAVSTHQSSPFLASKSLGKENAMHSNLYLSLLARIWCSSQLPAARIAALRAAAATLKSAEDTCDFQNLIPYLLHALADPSAPVRRAAAACTVALSEASGSQANTSTWGSSKLYGSSGKAQKHVSQVVQLKSEDVSTLLSSILIPMLEESVMDPTFAIPAIREVLEGSKGSKSQPKHGMNAQTRTYYRLSFFASHLSLSPLVRIRIILFPIFNFSGKVSDTVRSNTILPLIQGWCTLPLAEASKVCDVEKVTLEDAYRGHLNALVAREAKSVQLLNELMIESLDSSKRLLAEAVFDKVAAVWPATKSEQRVTLARTLLDMSFKEGKDDGEKQCRERAIEILRNVKHDSATLLTFLESVPAAVQMPEGPPTKKRRRTSRNEMARVELASQDDVQRFVAKADFGFFELIEGSNPGQPSQPFSRVYSLSSTTWQPLKQQSGSELVYVQSMILGSLTPIVDTLKVSDLVVHGFMHANTVQQQKDTADYQSSVRADLLIDCIRHSTSPQVQNSALLLIANLASWVPELILHNLMPIFTFIGSTLLRQQDDYSAQVVDKVWCYHFTQTISRVVPQLAASLRAKHKNFLTGVSDLLLSFTAAFEHIPLHRRLKLFSELARTLGPQDSLSAIISLLADRYHNGKTQRRFSTELLLVFDPIHTLDAIKGYLDLVVDAAGPKRKVSDSLFGLNDKTAAQVETAIKNLLVSLADLATDDRLRAHVTRAFRRKDDPARPREVFANIVETTIQLSKKVASSPKLYEACSRVLANCLDLLPTTDLVKSAELLLVNTDHQVQIAAIKAVELRAGNAVQNDKKSVISLISFLPSVEKVLQQSQHTDAKIISVGCIDRIVERFGKKDMTAVASIAQTIAGSQALSSGNDTIRVLSLLCLTSIVDVLEDEAIALLPTVLPTAFDYLSQAIEGEKNGLHNAVYSLLSNIVERLGYMFSRDYLETALRLSHRSAVGGLEDTCDESRRTFYQNVSEHLGAQETFAAIKTTWPHALSQGFEASSEHLELLRSTVDLQSKSKLIKASSTLSEQAIDSQEEQEYDDEEMNQLDNTLMSRTCHGSEAQRCPPSGPFFVQLVDQEGPMSAKPEYAVTFYKFLAAFFDKFKSDCSRATQATSSTTQPKMLEHVAQEDADSELRSAVLGALQKSFQHDQDAFWQAPSHFGTILKPLVNLLTISATEEVTEVVIPTITDLAASSSSSIDNHRELNTILLRYMRSDSAATRLATVKCEQSLTTRLGEEWLGLLPEMLPFISELREDDDEMVERETQRWISQVEGVLGESLEGMLQ.

HEAT repeat units follow at residues 164 to 202, 490 to 528, 564 to 605, 987 to 1025, 1236 to 1275, 1605 to 1646, and 1667 to 1705; these read EELV…GRGE, TCDF…ASGS, TLLS…PKHG, TQTI…AFEH, VISL…RFGK, EEVT…DSAA, and LGLL…VLGE.

Belongs to the HEATR1/UTP10 family. In terms of assembly, component of the ribosomal small subunit (SSU) processome.

It is found in the nucleus. The protein localises to the nucleolus. In terms of biological role, involved in nucleolar processing of pre-18S ribosomal RNA. Involved in ribosome biosynthesis. The sequence is that of U3 small nucleolar RNA-associated protein 10 from Phaeosphaeria nodorum (strain SN15 / ATCC MYA-4574 / FGSC 10173) (Glume blotch fungus).